The chain runs to 288 residues: Protease HtpX (288 aa).

2 helical membrane-spanning segments follow: residues 4–24 and 36–56; these read VMLF…VLNI and LSGL…ISLM. His143 provides a ligand contact to Zn(2+). The active site involves Glu144. Residue His147 participates in Zn(2+) binding. The next 2 membrane-spanning stretches (helical) occupy residues 151 to 171 and 193 to 213; these read GDMV…IFLS and MVYF…ASFI. A Zn(2+)-binding site is contributed by Glu222.

The protein belongs to the peptidase M48B family. Zn(2+) is required as a cofactor.

The protein resides in the cell inner membrane. This Vibrio vulnificus (strain YJ016) protein is Protease HtpX.